The following is a 297-amino-acid chain: Probable endonuclease 4 (297 aa).

The tract at residues 1–21 (MPEIGAHVSAAGGPQRAPERG) is disordered. Residues His67, His107, Glu145, Asp179, His182, His216, Asp229, His231, and Glu261 each coordinate Zn(2+).

This sequence belongs to the AP endonuclease 2 family. Zn(2+) serves as cofactor.

The catalysed reaction is Endonucleolytic cleavage to 5'-phosphooligonucleotide end-products.. In terms of biological role, endonuclease IV plays a role in DNA repair. It cleaves phosphodiester bonds at apurinic or apyrimidinic (AP) sites, generating a 3'-hydroxyl group and a 5'-terminal sugar phosphate. The chain is Probable endonuclease 4 from Halorhodospira halophila (strain DSM 244 / SL1) (Ectothiorhodospira halophila (strain DSM 244 / SL1)).